The primary structure comprises 148 residues: Probable glucosamine 6-phosphate N-acetyltransferase (148 aa).

An N-acetyltransferase domain is found at 3 to 148 (ISINELNFDD…KQMALYLNGK (146 aa)). Residues Thr25, 72-75 (KFIH), and 84-86 (EDV) each bind substrate. Residues 86-88 (VVV) and 94-99 (LHGIGK) each bind acetyl-CoA. Substrate is bound by residues 115-116 (YK) and Asp120. 129–131 (YCK) serves as a coordination point for acetyl-CoA. Glu138 lines the substrate pocket.

This sequence belongs to the acetyltransferase family. GNA1 subfamily.

The catalysed reaction is D-glucosamine 6-phosphate + acetyl-CoA = N-acetyl-D-glucosamine 6-phosphate + CoA + H(+). Its pathway is nucleotide-sugar biosynthesis; UDP-N-acetyl-alpha-D-glucosamine biosynthesis; N-acetyl-alpha-D-glucosamine 1-phosphate from alpha-D-glucosamine 6-phosphate (route I): step 1/2. The polypeptide is Probable glucosamine 6-phosphate N-acetyltransferase (Acanthamoeba polyphaga (Amoeba)).